A 525-amino-acid polypeptide reads, in one-letter code: tRNA(Ile)-lysidine synthase (525 aa).

32 to 37 provides a ligand contact to ATP; that stretch reads SGGRDS.

Belongs to the tRNA(Ile)-lysidine synthase family.

The protein localises to the cytoplasm. The enzyme catalyses cytidine(34) in tRNA(Ile2) + L-lysine + ATP = lysidine(34) in tRNA(Ile2) + AMP + diphosphate + H(+). Its function is as follows. Ligates lysine onto the cytidine present at position 34 of the AUA codon-specific tRNA(Ile) that contains the anticodon CAU, in an ATP-dependent manner. Cytidine is converted to lysidine, thus changing the amino acid specificity of the tRNA from methionine to isoleucine. In Psychrobacter sp. (strain PRwf-1), this protein is tRNA(Ile)-lysidine synthase.